Consider the following 229-residue polypeptide: Small ribosomal subunit protein uS5 (229 aa).

In terms of domain architecture, S5 DRBM spans 61–124 (LEEQVLDVKL…AHAKLSLIKV (64 aa)).

This sequence belongs to the universal ribosomal protein uS5 family. In terms of assembly, part of the 30S ribosomal subunit. Contacts protein S4.

Functionally, with S4 and S12 plays an important role in translational accuracy. In Methanococcus maripaludis (strain C7 / ATCC BAA-1331), this protein is Small ribosomal subunit protein uS5.